The sequence spans 183 residues: UPF0397 protein VSAL_I1988 (183 aa).

A run of 5 helical transmembrane segments spans residues Val8–Ile28, Ala41–Ile61, Val74–Ile94, Phe110–Phe130, and Leu147–Thr167.

Belongs to the UPF0397 family.

The protein localises to the cell membrane. The protein is UPF0397 protein VSAL_I1988 of Aliivibrio salmonicida (strain LFI1238) (Vibrio salmonicida (strain LFI1238)).